The chain runs to 350 residues: Bifunctional UDP-glucose 4-epimerase and UDP-xylose 4-epimerase 1 (350 aa).

NAD(+)-binding positions include 15 to 17, 36 to 40, 67 to 68, F89, and K93; these read GFI, DNFDN, and DL. S133 contributes to the substrate binding site. Y157 acts as the Proton acceptor in catalysis. 2 residues coordinate NAD(+): K161 and Y185.

The protein belongs to the NAD(P)-dependent epimerase/dehydratase family. NAD(+) serves as cofactor.

It carries out the reaction UDP-alpha-D-glucose = UDP-alpha-D-galactose. It catalyses the reaction UDP-beta-L-arabinopyranose = UDP-alpha-D-xylose. It participates in carbohydrate metabolism; galactose metabolism. The protein operates within nucleotide-sugar biosynthesis; UDP-L-arabinose biosynthesis; UDP-L-arabinose from UDP-alpha-D-xylose: step 1/1. Its pathway is cell wall biogenesis; cell wall polysaccharide biosynthesis. With respect to regulation, inhibited by Hg(2+). Catalyzes the interconversion between UDP-glucose and UDP-galactose and the interconversion between UDP-arabinose and UDP-xylose. The protein is Bifunctional UDP-glucose 4-epimerase and UDP-xylose 4-epimerase 1 of Pisum sativum (Garden pea).